A 191-amino-acid chain; its full sequence is MTKNKGLIIILSSPSGAGKSSLAKALLEIDHNLRLSISATTRKPRPNEQDGVNYYFKTKVEFEKLVKQNQFLEHAKIYDNYYGTPKKHVENLLNQGLDVLFDIDWQGARSIKQNAVNAVSIFILPPNLEVLEQRLRNRAADNEEAIQLRMASAQAEISHSNEYDHIITNDDFNDTIQQIHTIILQERKKRN.

Positions 6–184 (GLIIILSSPS…TIQQIHTIIL (179 aa)) constitute a Guanylate kinase-like domain. 13–20 (SPSGAGKS) serves as a coordination point for ATP.

It belongs to the guanylate kinase family.

The protein localises to the cytoplasm. The catalysed reaction is GMP + ATP = GDP + ADP. In terms of biological role, essential for recycling GMP and indirectly, cGMP. This Rickettsia bellii (strain RML369-C) protein is Guanylate kinase.